Reading from the N-terminus, the 1213-residue chain is Filamin-A-interacting protein 1 (1213 aa).

The interval 1–70 is disordered; it reads MRSRNQGGES…TSGECERKTK (70 aa). Over residues 61 to 70 the composition is skewed to basic and acidic residues; the sequence is TSGECERKTK. Ser-138 is subject to Phosphoserine. Coiled-coil stretches lie at residues 192–591 and 624–781; these read DYMN…ELSC and PEDN…LSKR. 2 disordered regions span residues 878–900 and 949–976; these read NGPS…PGEV and KPRI…GPER. 2 stretches are compositionally biased toward polar residues: residues 880-894 and 960-970; these read PSIT…NSSP and VMPQKQKSGDT. At Ser-979 the chain carries Phosphoserine. A disordered region spans residues 1103 to 1213; that stretch reads VSTGTVLRSP…STTSLGGGKG (111 aa). Positions 1125–1138 are enriched in low complexity; the sequence is VTSTITITPVTTSS. Over residues 1139 to 1156 the composition is skewed to polar residues; that stretch reads ARGTQSVSGQDGSSQRPT. The span at 1168 to 1179 shows a compositional bias: low complexity; it reads AGKPVVAAPGAG.

The protein belongs to the FILIP1 family. In terms of assembly, interacts with FLNA. Interacts with RHOD (in GTP-bound form). As to expression, moderately expressed in adult heart and brain. Weakly expressed in lung, skeletal muscle, ovary, testis, kidney, and fetal brain, and hardly detectable in liver, pancreas, spleen, and fetal liver. Within brain, moderate expression is found in amygdala and caudate nucleus. Expressed in skin fibroblasts.

The protein localises to the cytoplasm. The protein resides in the cytoskeleton. Its function is as follows. By acting through a filamin-A/F-actin axis, it controls the start of neocortical cell migration from the ventricular zone. May be able to induce the degradation of filamin-A. The protein is Filamin-A-interacting protein 1 (FILIP1) of Homo sapiens (Human).